A 406-amino-acid chain; its full sequence is S-adenosylmethionine synthase (406 aa).

Histidine 5 is an ATP binding site. Aspartate 7 is a binding site for Mg(2+). Residue glutamate 33 coordinates K(+). L-methionine is bound by residues glutamate 46 and glutamine 89. Residues 89–99 (QSPDIAQGVDT) form a flexible loop region. Residues 164–166 (DGK), 240–241 (KF), aspartate 249, 255–256 (RK), alanine 272, and lysine 276 contribute to the ATP site. Aspartate 249 serves as a coordination point for L-methionine. Lysine 280 is a binding site for L-methionine.

It belongs to the AdoMet synthase family. In terms of assembly, homotetramer; dimer of dimers. Requires Mg(2+) as cofactor. It depends on K(+) as a cofactor.

Its subcellular location is the cytoplasm. It carries out the reaction L-methionine + ATP + H2O = S-adenosyl-L-methionine + phosphate + diphosphate. It participates in amino-acid biosynthesis; S-adenosyl-L-methionine biosynthesis; S-adenosyl-L-methionine from L-methionine: step 1/1. Functionally, catalyzes the formation of S-adenosylmethionine (AdoMet) from methionine and ATP. The overall synthetic reaction is composed of two sequential steps, AdoMet formation and the subsequent tripolyphosphate hydrolysis which occurs prior to release of AdoMet from the enzyme. The polypeptide is S-adenosylmethionine synthase (Synechococcus sp. (strain ATCC 27144 / PCC 6301 / SAUG 1402/1) (Anacystis nidulans)).